A 551-amino-acid polypeptide reads, in one-letter code: Glucans biosynthesis protein D (551 aa).

Residues 1-32 (MDRRRFIKGSMAMAAVCGTSGIASLFSQAAFA) constitute a signal peptide (tat-type signal).

Belongs to the OpgD/OpgG family. In terms of processing, predicted to be exported by the Tat system. The position of the signal peptide cleavage has not been experimentally proven.

It localises to the periplasm. Its pathway is glycan metabolism; osmoregulated periplasmic glucan (OPG) biosynthesis. Its function is as follows. Probably involved in the control of the structural glucose backbone of osmoregulated periplasmic glucans (OPGs). This is Glucans biosynthesis protein D from Escherichia coli O139:H28 (strain E24377A / ETEC).